Reading from the N-terminus, the 149-residue chain is D-aminoacyl-tRNA deacylase (149 aa).

A Gly-cisPro motif, important for rejection of L-amino acids motif is present at residues 137-138; that stretch reads GP.

Belongs to the DTD family. Homodimer.

The protein localises to the cytoplasm. The enzyme catalyses glycyl-tRNA(Ala) + H2O = tRNA(Ala) + glycine + H(+). It carries out the reaction a D-aminoacyl-tRNA + H2O = a tRNA + a D-alpha-amino acid + H(+). In terms of biological role, an aminoacyl-tRNA editing enzyme that deacylates mischarged D-aminoacyl-tRNAs. Also deacylates mischarged glycyl-tRNA(Ala), protecting cells against glycine mischarging by AlaRS. Acts via tRNA-based rather than protein-based catalysis; rejects L-amino acids rather than detecting D-amino acids in the active site. By recycling D-aminoacyl-tRNA to D-amino acids and free tRNA molecules, this enzyme counteracts the toxicity associated with the formation of D-aminoacyl-tRNA entities in vivo and helps enforce protein L-homochirality. This Clostridium botulinum (strain Alaska E43 / Type E3) protein is D-aminoacyl-tRNA deacylase.